Reading from the N-terminus, the 337-residue chain is Glyceraldehyde-3-phosphate dehydrogenase (337 aa).

NAD(+) is bound by residues 12 to 13 (RI), D34, and K79. D-glyceraldehyde 3-phosphate-binding positions include 150 to 152 (SCT), T181, 210 to 211 (TG), and R233. Residue C151 is the Nucleophile of the active site. An NAD(+)-binding site is contributed by N315.

It belongs to the glyceraldehyde-3-phosphate dehydrogenase family. As to quaternary structure, homotetramer. As to expression, expressed in all tissues examined.

The protein localises to the cytoplasm. It catalyses the reaction D-glyceraldehyde 3-phosphate + phosphate + NAD(+) = (2R)-3-phospho-glyceroyl phosphate + NADH + H(+). The protein operates within carbohydrate degradation; glycolysis; pyruvate from D-glyceraldehyde 3-phosphate: step 1/5. In Lentinula edodes (Shiitake mushroom), this protein is Glyceraldehyde-3-phosphate dehydrogenase (gpd).